Reading from the N-terminus, the 315-residue chain is tRNA pseudouridine synthase B (315 aa).

Asp-54 serves as the catalytic Nucleophile.

This sequence belongs to the pseudouridine synthase TruB family. Type 1 subfamily.

It carries out the reaction uridine(55) in tRNA = pseudouridine(55) in tRNA. In terms of biological role, responsible for synthesis of pseudouridine from uracil-55 in the psi GC loop of transfer RNAs. The polypeptide is tRNA pseudouridine synthase B (Agrobacterium fabrum (strain C58 / ATCC 33970) (Agrobacterium tumefaciens (strain C58))).